Reading from the N-terminus, the 91-residue chain is Small ribosomal subunit protein uS19 (91 aa).

This sequence belongs to the universal ribosomal protein uS19 family.

Functionally, protein S19 forms a complex with S13 that binds strongly to the 16S ribosomal RNA. The sequence is that of Small ribosomal subunit protein uS19 from Actinobacillus pleuropneumoniae serotype 7 (strain AP76).